The sequence spans 299 residues: CCR4-NOT transcription complex subunit 9 (299 aa).

Belongs to the CNOT9 family. Homodimer. Component of the CCR4-NOT complex.

The protein resides in the nucleus. Its subcellular location is the cytoplasm. It localises to the P-body. Functionally, component of the CCR4-NOT complex which is one of the major cellular mRNA deadenylases and is linked to various cellular processes including bulk mRNA degradation, miRNA-mediated repression, translational repression during translational initiation and general transcription regulation. Additional complex functions may be a consequence of its influence on mRNA expression. Involved in down-regulation of MYB- and JUN-dependent transcription. Enhances ligand-dependent transcriptional activity of nuclear hormone receptors. May play a role in cell differentiation. The chain is CCR4-NOT transcription complex subunit 9 from Xenopus tropicalis (Western clawed frog).